Reading from the N-terminus, the 412-residue chain is Serine hydroxymethyltransferase (412 aa).

Residues Leu-117 and 121-123 (GHL) each bind (6S)-5,6,7,8-tetrahydrofolate. Lys-226 carries the N6-(pyridoxal phosphate)lysine modification. Position 349–351 (349–351 (SPF)) interacts with (6S)-5,6,7,8-tetrahydrofolate.

The protein belongs to the SHMT family. In terms of assembly, homodimer. It depends on pyridoxal 5'-phosphate as a cofactor.

Its subcellular location is the cytoplasm. It catalyses the reaction (6R)-5,10-methylene-5,6,7,8-tetrahydrofolate + glycine + H2O = (6S)-5,6,7,8-tetrahydrofolate + L-serine. It participates in one-carbon metabolism; tetrahydrofolate interconversion. It functions in the pathway amino-acid biosynthesis; glycine biosynthesis; glycine from L-serine: step 1/1. Its function is as follows. Catalyzes the reversible interconversion of serine and glycine with tetrahydrofolate (THF) serving as the one-carbon carrier. This reaction serves as the major source of one-carbon groups required for the biosynthesis of purines, thymidylate, methionine, and other important biomolecules. Also exhibits THF-independent aldolase activity toward beta-hydroxyamino acids, producing glycine and aldehydes, via a retro-aldol mechanism. This chain is Serine hydroxymethyltransferase, found in Nitratidesulfovibrio vulgaris (strain DSM 19637 / Miyazaki F) (Desulfovibrio vulgaris).